The following is a 277-amino-acid chain: MVTPQSPTPMFNGLDDDLYSDAKYAHEINDKMRVPKRIKATGEYSNEDLLLSNQNGMISSWNYHDKIDMNVPDRIVVLGHNQHLETRSAPREIQLENSILPKNPSVGLVRVQTPPRIITLTDQHFPSASEESSPIRANGHHLYGNDLDEDADDEEVHATQYVRANGVARMGFQGNDTNSVESDSQLTTGSASKRSQLNQQQHNNLDASMLAHREGTPMGELTPHEEILYLRRQLAKLNRRVLNIEINNEQRTQREKIVYCLGLAYFVLKTIFWLNRN.

Residues 1 to 256 (MVTPQSPTPM…NNEQRTQREK (256 aa)) are Cytoplasmic-facing. Disordered regions lie at residues 124-148 (HFPS…NDLD) and 167-200 (VARM…LNQQ). Phosphoserine occurs at positions 127, 129, 132, and 133. Residues 174–200 (GNDTNSVESDSQLTTGSASKRSQLNQQ) show a composition bias toward polar residues. Thr177 bears the Phosphothreonine mark. A phosphoserine mark is found at Ser179, Ser182, and Ser190. Thr216 and Thr222 each carry phosphothreonine. Positions 225 to 253 (EEILYLRRQLAKLNRRVLNIEINNEQRTQ) form a coiled coil. A helical; Anchor for type IV membrane protein transmembrane segment spans residues 257–274 (IVYCLGLAYFVLKTIFWL). Residues 275-277 (NRN) are Lumenal-facing.

The protein belongs to the Tango11 family.

It is found in the endoplasmic reticulum membrane. It localises to the mitochondrion outer membrane. The protein resides in the peroxisome. In terms of biological role, may play a role in mitochondrial and peroxisomal fission. The chain is Transport and Golgi organization protein 11 (Tango11) from Drosophila melanogaster (Fruit fly).